The following is a 347-amino-acid chain: 4-hydroxy-2-oxovalerate aldolase 2 (347 aa).

The region spanning 7–259 is the Pyruvate carboxyltransferase domain; sequence VRITDTSLRD…KTGIDFFDIA (253 aa). 15-16 is a substrate binding site; the sequence is RD. Asp16 lines the Mn(2+) pocket. His19 functions as the Proton acceptor in the catalytic mechanism. The substrate site is built by Ser169 and His198. Residues His198 and His200 each coordinate Mn(2+). Tyr289 contacts substrate.

Belongs to the 4-hydroxy-2-oxovalerate aldolase family.

The enzyme catalyses (S)-4-hydroxy-2-oxopentanoate = acetaldehyde + pyruvate. This chain is 4-hydroxy-2-oxovalerate aldolase 2, found in Mycobacterium marinum (strain ATCC BAA-535 / M).